A 267-amino-acid chain; its full sequence is Collectin-11 (267 aa).

An N-terminal signal peptide occupies residues 1 to 21 (MKRALALMGLAFLCVLRAGAA). The segment at 40–109 (GDAGEKGDKG…GPNGEPGIPC (70 aa)) is disordered. Basic and acidic residues-rich tracts occupy residues 41–50 (DAGEKGDKGA) and 62–71 (EKGDVGDKGQ). The Collagen-like domain occupies 49 to 108 (GAPGRPGRVGPTGEKGDVGDKGQKGGVGRHGKIGPIGSKGEKGDSGDIGPPGPNGEPGIP). Residues 110–144 (ECSQLRKAIGEMDNQVTQLTAELKFIKNAVAGVRE) are a coiled coil. The C-type lectin domain occupies 145-261 (TEQKMYLLVK…CHLTMHFLCE (117 aa)). 2 disulfides stabilise this stretch: cysteine 166-cysteine 260 and cysteine 238-cysteine 252. Arginine 196 contributes to the a carbohydrate binding site. Ca(2+) contacts are provided by aspartate 203, glutamate 207, glutamate 228, asparagine 230, asparagine 231, aspartate 234, glutamate 236, and aspartate 237. Glutamate 236 is a binding site for a carbohydrate. A carbohydrate-binding positions include glutamate 240 and 248 to 250 (NDV). Ca(2+) is bound by residues asparagine 248 and aspartate 249.

It belongs to the COLEC10/COLEC11 family. Homotrimer; disulfide-linked. Interacts with MASP1; probably triggers the lectin pathway of complement.

The protein localises to the secreted. In terms of biological role, lectin that plays a role in innate immunity, apoptosis and embryogenesis. Calcium-dependent lectin that binds self and non-self glycoproteins presenting high mannose oligosaccharides with at least one terminal alpha-1,2-linked mannose epitope. Primarily recognizes the terminal disaccharide of the glycan. Also recognizes a subset of fucosylated glycans and lipopolysaccharides. Plays a role in innate immunity through its ability to bind non-self sugars presented by microorganisms and to activate the complement through the recruitment of MAPS1. Also plays a role in apoptosis through its ability to bind in a calcium-independent manner the DNA present at the surface of apoptotic cells and to activate the complement in response to this binding. Finally, plays a role in development, probably serving as a guidance cue during the migration of neural crest cells and other cell types during embryogenesis. The sequence is that of Collectin-11 (COLEC11) from Bos taurus (Bovine).